We begin with the raw amino-acid sequence, 93 residues long: Pyrimidine/purine nucleoside phosphorylase (93 aa).

This sequence belongs to the nucleoside phosphorylase PpnP family.

It catalyses the reaction a purine D-ribonucleoside + phosphate = a purine nucleobase + alpha-D-ribose 1-phosphate. It carries out the reaction adenosine + phosphate = alpha-D-ribose 1-phosphate + adenine. The catalysed reaction is cytidine + phosphate = cytosine + alpha-D-ribose 1-phosphate. The enzyme catalyses guanosine + phosphate = alpha-D-ribose 1-phosphate + guanine. It catalyses the reaction inosine + phosphate = alpha-D-ribose 1-phosphate + hypoxanthine. It carries out the reaction thymidine + phosphate = 2-deoxy-alpha-D-ribose 1-phosphate + thymine. The catalysed reaction is uridine + phosphate = alpha-D-ribose 1-phosphate + uracil. The enzyme catalyses xanthosine + phosphate = alpha-D-ribose 1-phosphate + xanthine. In terms of biological role, catalyzes the phosphorolysis of diverse nucleosides, yielding D-ribose 1-phosphate and the respective free bases. Can use uridine, adenosine, guanosine, cytidine, thymidine, inosine and xanthosine as substrates. Also catalyzes the reverse reactions. The protein is Pyrimidine/purine nucleoside phosphorylase of Pseudoalteromonas atlantica (strain T6c / ATCC BAA-1087).